The sequence spans 282 residues: Succinate dehydrogenase [ubiquinone] iron-sulfur subunit, mitochondrial (282 aa).

The N-terminal 26 residues, 1 to 26 (MAAVVFSLRRSGPVLRLSGALQVSRG), are a transit peptide targeting the mitochondrion. The 2Fe-2S ferredoxin-type domain maps to 42–135 (KKFAIYRWDP…VSKIYPLPHM (94 aa)). [2Fe-2S] cluster-binding residues include cysteine 95, cysteine 100, cysteine 103, and cysteine 115. The 4Fe-4S ferredoxin-type domain occupies 178-208 (DRDKLDGLYECILCACCSTSCPSYWWNADKY). Residues cysteine 188, cysteine 191, and cysteine 194 each coordinate [4Fe-4S] cluster. Cysteine 198 lines the [3Fe-4S] cluster pocket. Residue tryptophan 203 participates in a ubiquinone binding. Residues cysteine 245 and cysteine 251 each coordinate [3Fe-4S] cluster. [4Fe-4S] cluster is bound at residue cysteine 255.

The protein belongs to the succinate dehydrogenase/fumarate reductase iron-sulfur protein family. In terms of assembly, component of complex II composed of four subunits: the flavoprotein (FP) sdha, iron-sulfur protein (IP) sdhb, and a cytochrome b composed of sdhc and sdhd. The cofactor is [2Fe-2S] cluster. It depends on [3Fe-4S] cluster as a cofactor. Requires [4Fe-4S] cluster as cofactor.

It localises to the mitochondrion inner membrane. The enzyme catalyses a quinone + succinate = fumarate + a quinol. It carries out the reaction (R)-malate + a quinone = enol-oxaloacetate + a quinol. The catalysed reaction is (S)-malate + a quinone = enol-oxaloacetate + a quinol. It functions in the pathway carbohydrate metabolism; tricarboxylic acid cycle; fumarate from succinate (eukaryal route): step 1/1. With respect to regulation, enol-oxaloacetate inhibits the succinate dehydrogenase activity. Functionally, iron-sulfur protein (IP) subunit of the succinate dehydrogenase complex (mitochondrial respiratory chain complex II), responsible for transferring electrons from succinate to ubiquinone (coenzyme Q). SDH also oxidizes malate to the non-canonical enol form of oxaloacetate, enol-oxaloacetate. Enol-oxaloacetate, which is a potent inhibitor of the succinate dehydrogenase activity, is further isomerized into keto-oxaloacetate. The sequence is that of Succinate dehydrogenase [ubiquinone] iron-sulfur subunit, mitochondrial (sdhb) from Xenopus laevis (African clawed frog).